The chain runs to 285 residues: NAD kinase (285 aa).

Aspartate 64 serves as the catalytic Proton acceptor. Residues 64–65 (DG), 140–141 (ND), arginine 151, arginine 168, aspartate 170, and 181–186 (TGYNLS) each bind NAD(+).

Belongs to the NAD kinase family. The cofactor is a divalent metal cation.

It localises to the cytoplasm. It catalyses the reaction NAD(+) + ATP = ADP + NADP(+) + H(+). Involved in the regulation of the intracellular balance of NAD and NADP, and is a key enzyme in the biosynthesis of NADP. Catalyzes specifically the phosphorylation on 2'-hydroxyl of the adenosine moiety of NAD to yield NADP. This Lachnoclostridium phytofermentans (strain ATCC 700394 / DSM 18823 / ISDg) (Clostridium phytofermentans) protein is NAD kinase.